The chain runs to 171 residues: 3-hydroxydecanoyl-[acyl-carrier-protein] dehydratase (171 aa).

Histidine 70 is an active-site residue.

It belongs to the thioester dehydratase family. FabA subfamily. In terms of assembly, homodimer.

It localises to the cytoplasm. It carries out the reaction a (3R)-hydroxyacyl-[ACP] = a (2E)-enoyl-[ACP] + H2O. The enzyme catalyses (3R)-hydroxydecanoyl-[ACP] = (2E)-decenoyl-[ACP] + H2O. The catalysed reaction is (2E)-decenoyl-[ACP] = (3Z)-decenoyl-[ACP]. It participates in lipid metabolism; fatty acid biosynthesis. Its function is as follows. Necessary for the introduction of cis unsaturation into fatty acids. Catalyzes the dehydration of (3R)-3-hydroxydecanoyl-ACP to E-(2)-decenoyl-ACP and then its isomerization to Z-(3)-decenoyl-ACP. Can catalyze the dehydratase reaction for beta-hydroxyacyl-ACPs with saturated chain lengths up to 16:0, being most active on intermediate chain length. The chain is 3-hydroxydecanoyl-[acyl-carrier-protein] dehydratase from Histophilus somni (strain 129Pt) (Haemophilus somnus).